The sequence spans 519 residues: Cytochrome P450 52A10 (519 aa).

Cysteine 466 provides a ligand contact to heme.

The protein belongs to the cytochrome P450 family. Heme serves as cofactor.

The protein localises to the membrane. Its function is as follows. Together with an NADPH cytochrome P450 the enzyme system catalyzes the terminal hydroxylation as the first step in the assimilation of alkanes and fatty acids. This chain is Cytochrome P450 52A10 (CYP52A10), found in Candida maltosa (Yeast).